The chain runs to 391 residues: Ferrochelatase (391 aa).

Fe cation is bound by residues H196 and E281.

It belongs to the ferrochelatase family.

It localises to the cytoplasm. The catalysed reaction is heme b + 2 H(+) = protoporphyrin IX + Fe(2+). It participates in porphyrin-containing compound metabolism; protoheme biosynthesis; protoheme from protoporphyrin-IX: step 1/1. Catalyzes the ferrous insertion into protoporphyrin IX. The chain is Ferrochelatase from Prochlorococcus marinus (strain NATL2A).